The primary structure comprises 240 residues: RNA-binding protein pno1 (240 aa).

The segment covering 1–15 (MEAENIRADAFEPAK) has biased composition (basic and acidic residues). The segment at 1 to 61 (MEAENIRADA…APPKAKRARS (61 aa)) is disordered. The region spanning 164–213 (QSRAIGRLAGKGGRTKFTIENVTKTRIVLADSKIHILGSYQNIQLARRAV) is the KH domain.

It belongs to the PNO1 family.

It is found in the nucleus. The protein localises to the nucleolus. The polypeptide is RNA-binding protein pno1 (l(1)G0004) (Drosophila melanogaster (Fruit fly)).